Reading from the N-terminus, the 237-residue chain is UPF0174 protein YaaW (237 aa).

The protein belongs to the UPF0174 family.

This chain is UPF0174 protein YaaW (yaaW), found in Escherichia coli (strain K12).